A 552-amino-acid chain; its full sequence is Glutamine--tRNA ligase (552 aa).

The 'HIGH' region motif lies at 34-44 (PEPNGYLHIGH). Residues 35 to 37 (EPN) and 41 to 47 (HIGHAKS) contribute to the ATP site. Residues D67 and Y212 each contribute to the L-glutamine site. ATP is bound by residues T231, 261 to 262 (RL), and 269 to 271 (MSK). The 'KMSKS' region signature appears at 268 to 272 (VMSKR).

The protein belongs to the class-I aminoacyl-tRNA synthetase family. As to quaternary structure, monomer.

It localises to the cytoplasm. The enzyme catalyses tRNA(Gln) + L-glutamine + ATP = L-glutaminyl-tRNA(Gln) + AMP + diphosphate. The chain is Glutamine--tRNA ligase from Aliivibrio fischeri (strain MJ11) (Vibrio fischeri).